A 252-amino-acid chain; its full sequence is UPF0246 protein Fjoh_4905 (252 aa).

Belongs to the UPF0246 family.

The protein is UPF0246 protein Fjoh_4905 of Flavobacterium johnsoniae (strain ATCC 17061 / DSM 2064 / JCM 8514 / BCRC 14874 / CCUG 350202 / NBRC 14942 / NCIMB 11054 / UW101) (Cytophaga johnsonae).